A 128-amino-acid polypeptide reads, in one-letter code: Glycine cleavage system H protein (128 aa).

The region spanning Leu24–Arg106 is the Lipoyl-binding domain. An N6-lipoyllysine modification is found at Lys65.

This sequence belongs to the GcvH family. In terms of assembly, the glycine cleavage system is composed of four proteins: P, T, L and H. (R)-lipoate is required as a cofactor.

Its function is as follows. The glycine cleavage system catalyzes the degradation of glycine. The H protein shuttles the methylamine group of glycine from the P protein to the T protein. The chain is Glycine cleavage system H protein from Prochlorococcus marinus (strain NATL2A).